A 316-amino-acid chain; its full sequence is MNPKNAHLATHYLQFDRAQWASLRDSVPLILTEEEIIRLRGINENLSLEEVAAIYLPLSRLLNFYISSNLRQRAILEEFLGTHKQNVPYVIGIAGSVAVGKSTTARLLQALLSRWPEHRRVELVTTDGFLHSNKVLTERGLMKKKGFPESYDMKNLVKFISRIKSGAPKVEAPVYSHLRYDIIPNQKKIVQQPDILILEGLNVLQSGMDYPHDPHHVFVSDFVDFSIYVDASYDLLAHWYINRFLQFRRGAFSDPNSYFHHYAQICEKEAMTVARRLWTEINGLNLNENILPTRERASLIMTKGDNHEVKSVWLKK.

Residue 95 to 102 coordinates ATP; the sequence is GSVAVGKS.

The protein belongs to the prokaryotic pantothenate kinase family.

It is found in the cytoplasm. It catalyses the reaction (R)-pantothenate + ATP = (R)-4'-phosphopantothenate + ADP + H(+). It participates in cofactor biosynthesis; coenzyme A biosynthesis; CoA from (R)-pantothenate: step 1/5. This chain is Pantothenate kinase, found in Hamiltonella defensa subsp. Acyrthosiphon pisum (strain 5AT).